The primary structure comprises 134 residues: Protein OPG030 (134 aa).

One can recognise a BACK domain in the interval 88–133 (YKENGLRNSFLRQYINNNIEEIRNTDQFLKFDVDSVCDILNNDETI).

It belongs to the orthopoxvirus OPG030 family.

In Variola virus (isolate Human/India/Ind3/1967) (VARV), this protein is Protein OPG030 (OPG30).